The following is an 825-amino-acid chain: E3 ubiquitin-protein ligase ICP0 (825 aa).

A compositionally biased stretch (polar residues) spans 1–10 (MEPRPGTSSR). The interval 1–121 (MEPRPGTSSR…VGEEEAEAGG (121 aa)) is disordered. Acidic residues predominate over residues 46 to 57 (DSEEETEVGISD). Residues 126-167 (CAVCTDEIAPPLRCQSFPCLHPFCIPCMKTWIPLRNTCPLCN) form an RING-type zinc finger. Disordered stretches follow at residues 221–312 (RSLS…GGGP), 325–683 (PPAA…PAPG), and 803–825 (RHPW…GHGE). Residues 242–251 (TDDEDDDLAD) show a composition bias toward acidic residues. Composition is skewed to low complexity over residues 273–283 (TRGTSQPAATR), 290–303 (PRSS…LRAG), and 350–367 (PPAR…VISD). Residues 368–379 (SPPPSPRRPAGP) are compositionally biased toward pro residues. 2 stretches are compositionally biased toward low complexity: residues 380-394 (GPLS…QVSS) and 402-439 (PQSS…DAAG). Over residues 456–468 (RMTQAQTDTQAQS) the composition is skewed to polar residues. Over residues 479-491 (GSGGPGAEGGPGV) the composition is skewed to gly residues. Composition is skewed to low complexity over residues 492–510 (PRGT…GAAA) and 519–540 (DSGP…PLAP). Residues 552-563 (RAPDSDSGDRGH) are compositionally biased toward basic and acidic residues. Over residues 567-641 (APASAGAAPP…GGSVASASGA (75 aa)) the composition is skewed to low complexity. Residues 658 to 667 (GPRKCARKTR) are compositionally biased toward basic residues. Residues 811 to 825 (GAPAPAGDAPAGHGE) show a composition bias toward low complexity.

Post-translationally, auto-ubiquitinated.

It catalyses the reaction S-ubiquitinyl-[E2 ubiquitin-conjugating enzyme]-L-cysteine + [acceptor protein]-L-lysine = [E2 ubiquitin-conjugating enzyme]-L-cysteine + N(6)-ubiquitinyl-[acceptor protein]-L-lysine.. In terms of biological role, evades nuclear antiviral defenses triggered by dsDNA viruses. Acts during the initial stages of lytic infection and the reactivation of latent viral genome. Prevents the antiviral effect of nuclear bodies by degrading host PML and SP100. Prevents antiviral response to viral DNA induced by IFI16 by degrading it. Additionally, inhibits host IRF3 nuclear signaling to prevent interferon production by the infected cells. This Homo sapiens (Human) protein is E3 ubiquitin-protein ligase ICP0 (RL2).